Consider the following 819-residue polypeptide: Protein kinase C-binding protein NELL2 (819 aa).

Positions 1-24 (MHAMESRVLLRTFCVILGLGAVWG) are cleaved as a signal peptide. Residues N56, N228, N296, and N301 are each glycosylated (N-linked (GlcNAc...) asparagine). In terms of domain architecture, Laminin G-like spans 67 to 231 (PRSIKASTAT…AQCPDLNRTC (165 aa)). The VWFC 1 domain maps to 275 to 334 (RTCTVKGTTYRESESWTDGCKNCTCLNGTIQCETLVCPAPDCPPKSAPAYVDGKCCKECK). An EGF-like 1 domain is found at 400–442 (GYDFCSEKHTCMENSVCRNLNDRAVCSCRDGFRALREDNAYCE). Cystine bridges form between C404–C416, C410–C425, and C427–C441. 3 residues coordinate Ca(2+): D443, I444, and E446. An EGF-like 2; calcium-binding domain is found at 443 to 484 (DIDECAEGRHYCRENTMCVNTPGSFMCICKTGYIRIDDYSCT). Disulfide bonds link C447-C460, C454-C469, C471-C483, C489-C502, C496-C511, C513-C524, C528-C538, C532-C544, and C546-C555. Ca(2+) is bound by residues N462, T463, and S466. The EGF-like 3; calcium-binding domain maps to 485–525 (EHDECLTNQHNCDENALCFNTVGGHNCVCKPGYTGNGTTCK). Residue N520 is glycosylated (N-linked (GlcNAc...) asparagine). The region spanning 526 to 556 (AFCKDGCRNGGACIAANVCACPQGFTGPSCE) is the EGF-like 4 domain. O-linked (GlcNAc...) threonine glycosylation is present at T551. Ca(2+) is bound by residues D558, I559, and E561. An EGF-like 5; calcium-binding domain is found at 558-604 (DIDECSEGFVQCDSRANCINLPGWYHCECRDGYHDNGMFAPGGESCE). Intrachain disulfides connect C562-C575, C569-C584, and C586-C603. Residues N577, L578, and W581 each coordinate Ca(2+). The Ca(2+) site is built by D605, I606, and E608. The 36-residue stretch at 605 to 640 (DIDECGTGRHSCTNDTICFNLDGGYDCRCPHGKNCT) folds into the EGF-like 6; calcium-binding domain. 3 disulfide bridges follow: C609-C622, C616-C631, and C633-C639. N-linked (GlcNAc...) asparagine glycosylation occurs at N618. Ca(2+)-binding residues include N624, L625, and G628. An N-linked (GlcNAc...) asparagine glycan is attached at N638. In terms of domain architecture, VWFC 2 spans 701 to 759 (SQCLHQNGETVYNSGDTWVQDCRQCRCLQGEVDCWPLACPEVECEFSVLPENECCPRCV).

As to quaternary structure, homotrimer. Interacts with NICOL1; this interaction triggers epididymal differentiation. Interacts (via EGF domains) with ROBO3 (via FN domains); binding to ROBO3 induces repulsive guidance cue for commissural axons. Expressed in brain and testis but not in epididymis. Expressed in regions flanking the commissural axon trajectory, including the ventral horn.

It is found in the secreted. In terms of biological role, plays multiple roles in neural tissues, regulates neuronal proliferation, survival, differentiation, polarization, as well as axon guidance and synaptic functions. Plays an important role in axon development during neuronal differentiation through the MAPK intracellular signaling pathway. Via binding to its receptor ROBO3, plays a role in axon guidance, functioning as a repulsive axon guidance cue that contributes to commissural axon guidance to the midline. Required for neuron survival through the modulation of MAPK signaling pathways too. Involved in the regulation of hypothalamic GNRH secretion and the control of puberty. Epididymal-secreted protein that signals through a ROS1-pathway to regulate the epididymal initial segment (IS) maturation, sperm maturation and male fertility. The protein is Protein kinase C-binding protein NELL2 of Mus musculus (Mouse).